The chain runs to 342 residues: Elongation factor Ts (342 aa).

The segment at 79–82 is involved in Mg(2+) ion dislocation from EF-Tu; that stretch reads TDFV.

The protein belongs to the EF-Ts family.

It is found in the cytoplasm. Its function is as follows. Associates with the EF-Tu.GDP complex and induces the exchange of GDP to GTP. It remains bound to the aminoacyl-tRNA.EF-Tu.GTP complex up to the GTP hydrolysis stage on the ribosome. The chain is Elongation factor Ts from Lactococcus lactis subsp. cremoris (strain MG1363).